Here is a 142-residue protein sequence, read N- to C-terminus: HTH-type transcriptional regulator MntR (142 aa).

An HTH dtxR-type domain is found at 1–63; it reads MTTPSMEDYI…YEKYRGLVLT (63 aa). Residues Asp-8, Glu-11, His-77, Glu-99, Glu-102, and His-103 each contribute to the Mn(2+) site.

Belongs to the DtxR/MntR family. As to quaternary structure, homodimer.

The protein resides in the cytoplasm. Its activity is regulated as follows. DNA binding is strongly activated by Mn(2+). Its function is as follows. Central regulator of manganese homeostasis. The chain is HTH-type transcriptional regulator MntR from Bacillus velezensis (strain DSM 23117 / BGSC 10A6 / LMG 26770 / FZB42) (Bacillus amyloliquefaciens subsp. plantarum).